The following is a 39-amino-acid chain: Colipase (39 aa).

Disulfide bonds link Cys16–Cys27 and Cys22–Cys38.

It belongs to the colipase family. As to quaternary structure, forms a 1:1 stoichiometric complex with pancreatic lipase. In terms of tissue distribution, expressed by the pancreas.

Its subcellular location is the secreted. Functionally, colipase is a cofactor of pancreatic lipase. It allows the lipase to anchor itself to the lipid-water interface. Without colipase the enzyme is washed off by bile salts, which have an inhibitory effect on the lipase. The polypeptide is Colipase (Squalus acanthias (Spiny dogfish)).